We begin with the raw amino-acid sequence, 250 residues long: Intermembrane phospholipid transport system lipoprotein MlaA (250 aa).

The first 18 residues, 1-18 (MKTKTILTALLSAIALTG), serve as a signal peptide directing secretion. A lipid anchor (N-palmitoyl cysteine) is attached at Cys19. A lipid anchor (S-diacylglycerol cysteine) is attached at Cys19.

Belongs to the MlaA family.

The protein localises to the cell outer membrane. In terms of biological role, involved in a phospholipid transport pathway that maintains lipid asymmetry in the outer membrane by retrograde trafficking of phospholipids from the outer membrane to the inner membrane. The polypeptide is Intermembrane phospholipid transport system lipoprotein MlaA (Haemophilus influenzae (strain ATCC 51907 / DSM 11121 / KW20 / Rd)).